Reading from the N-terminus, the 386-residue chain is Succinate--CoA ligase [ADP-forming] subunit beta (386 aa).

The 236-residue stretch at 9-244 folds into the ATP-grasp domain; that stretch reads KEILRKYGVP…HDEEDPLETR (236 aa). ATP contacts are provided by residues Lys-46, 53-55, Glu-99, Cys-102, and Glu-107; that span reads GRG. Mg(2+) contacts are provided by Asn-199 and Asp-213. Substrate contacts are provided by residues Asn-264 and 321–323; that span reads GIM.

Belongs to the succinate/malate CoA ligase beta subunit family. As to quaternary structure, heterotetramer of two alpha and two beta subunits. Requires Mg(2+) as cofactor.

The enzyme catalyses succinate + ATP + CoA = succinyl-CoA + ADP + phosphate. The catalysed reaction is GTP + succinate + CoA = succinyl-CoA + GDP + phosphate. Its pathway is carbohydrate metabolism; tricarboxylic acid cycle; succinate from succinyl-CoA (ligase route): step 1/1. Its function is as follows. Succinyl-CoA synthetase functions in the citric acid cycle (TCA), coupling the hydrolysis of succinyl-CoA to the synthesis of either ATP or GTP and thus represents the only step of substrate-level phosphorylation in the TCA. The beta subunit provides nucleotide specificity of the enzyme and binds the substrate succinate, while the binding sites for coenzyme A and phosphate are found in the alpha subunit. In Rickettsia rickettsii (strain Iowa), this protein is Succinate--CoA ligase [ADP-forming] subunit beta.